The following is a 744-amino-acid chain: 5-methyltetrahydropteroyltriglutamate--homocysteine methyltransferase (744 aa).

Residues 17–20 (REVK) and K110 each bind 5-methyltetrahydropteroyltri-L-glutamate. Residues 422-424 (IGS) and E475 each bind L-homocysteine. L-methionine contacts are provided by residues 422–424 (IGS) and E475. W552 is a binding site for 5-methyltetrahydropteroyltri-L-glutamate. L-homocysteine is bound at residue D590. D590 provides a ligand contact to L-methionine. 5-methyltetrahydropteroyltri-L-glutamate is bound at residue E596. Zn(2+)-binding residues include H632, C634, and E656. The active-site Proton donor is the H685. C717 serves as a coordination point for Zn(2+).

It belongs to the vitamin-B12 independent methionine synthase family. It depends on Zn(2+) as a cofactor.

The catalysed reaction is 5-methyltetrahydropteroyltri-L-glutamate + L-homocysteine = tetrahydropteroyltri-L-glutamate + L-methionine. Its pathway is amino-acid biosynthesis; L-methionine biosynthesis via de novo pathway; L-methionine from L-homocysteine (MetE route): step 1/1. Functionally, catalyzes the transfer of a methyl group from 5-methyltetrahydrofolate to homocysteine resulting in methionine formation. The chain is 5-methyltetrahydropteroyltriglutamate--homocysteine methyltransferase from Trichodesmium erythraeum (strain IMS101).